We begin with the raw amino-acid sequence, 642 residues long: Chaperone protein DnaK (642 aa).

A Phosphothreonine; by autocatalysis modification is found at threonine 198. The segment covering 578-589 (DDKEAIESRMQK) has biased composition (basic and acidic residues). The segment at 578 to 642 (DDKEAIESRM…FEEVKDGDKK (65 aa)) is disordered. Residues 603 to 619 (AEQAAQQGGDAGAQAED) show a composition bias toward low complexity.

Belongs to the heat shock protein 70 family.

Its function is as follows. Acts as a chaperone. The polypeptide is Chaperone protein DnaK (Hahella chejuensis (strain KCTC 2396)).